The sequence spans 256 residues: Imidazole glycerol phosphate synthase subunit HisF (256 aa).

Catalysis depends on residues Asp12 and Asp131.

The protein belongs to the HisA/HisF family. As to quaternary structure, heterodimer of HisH and HisF.

The protein resides in the cytoplasm. The enzyme catalyses 5-[(5-phospho-1-deoxy-D-ribulos-1-ylimino)methylamino]-1-(5-phospho-beta-D-ribosyl)imidazole-4-carboxamide + L-glutamine = D-erythro-1-(imidazol-4-yl)glycerol 3-phosphate + 5-amino-1-(5-phospho-beta-D-ribosyl)imidazole-4-carboxamide + L-glutamate + H(+). Its pathway is amino-acid biosynthesis; L-histidine biosynthesis; L-histidine from 5-phospho-alpha-D-ribose 1-diphosphate: step 5/9. In terms of biological role, IGPS catalyzes the conversion of PRFAR and glutamine to IGP, AICAR and glutamate. The HisF subunit catalyzes the cyclization activity that produces IGP and AICAR from PRFAR using the ammonia provided by the HisH subunit. This chain is Imidazole glycerol phosphate synthase subunit HisF, found in Pseudomonas fluorescens (strain SBW25).